The sequence spans 235 residues: UPF0758 protein CD630_11440 (235 aa).

Positions 113-235 (KIMNPWDIQR…YFSFKENMII (123 aa)) constitute an MPN domain. Zn(2+) contacts are provided by His184, His186, and Asp197. Residues 184–197 (HNHPSGSVEPSRED) carry the JAMM motif motif.

Belongs to the UPF0758 family.

This chain is UPF0758 protein CD630_11440, found in Clostridioides difficile (strain 630) (Peptoclostridium difficile).